Consider the following 110-residue polypeptide: UPF0122 protein SERP0802 (110 aa).

This sequence belongs to the UPF0122 family.

Might take part in the signal recognition particle (SRP) pathway. This is inferred from the conservation of its genetic proximity to ftsY/ffh. May be a regulatory protein. The polypeptide is UPF0122 protein SERP0802 (Staphylococcus epidermidis (strain ATCC 35984 / DSM 28319 / BCRC 17069 / CCUG 31568 / BM 3577 / RP62A)).